Reading from the N-terminus, the 295-residue chain is Tyrosine recombinase XerC (295 aa).

Residues M1 to T84 form the Core-binding (CB) domain. The Tyr recombinase domain maps to K105–R289. Catalysis depends on residues R145, K169, H241, R244, and H267. Y276 acts as the O-(3'-phospho-DNA)-tyrosine intermediate in catalysis.

The protein belongs to the 'phage' integrase family. XerC subfamily. Forms a cyclic heterotetrameric complex composed of two molecules of XerC and two molecules of XerD.

The protein localises to the cytoplasm. Its function is as follows. Site-specific tyrosine recombinase, which acts by catalyzing the cutting and rejoining of the recombining DNA molecules. The XerC-XerD complex is essential to convert dimers of the bacterial chromosome into monomers to permit their segregation at cell division. It also contributes to the segregational stability of plasmids. In Lactobacillus leichmannii, this protein is Tyrosine recombinase XerC.